The chain runs to 318 residues: NADH-ubiquinone oxidoreductase chain 1 (318 aa).

Transmembrane regions (helical) follow at residues 2–22, 68–88, 100–120, 147–167, 171–191, 217–237, 254–273, and 294–314; these read FMLN…FLTL, ITMF…MWIP, LGVL…LWSG, AIIL…TLII, YIWL…STLA, GGPF…MNAL, LYTT…FLWI, and LPLT…MAGI.

It belongs to the complex I subunit 1 family.

The protein localises to the mitochondrion inner membrane. The catalysed reaction is a ubiquinone + NADH + 5 H(+)(in) = a ubiquinol + NAD(+) + 4 H(+)(out). Core subunit of the mitochondrial membrane respiratory chain NADH dehydrogenase (Complex I) that is believed to belong to the minimal assembly required for catalysis. Complex I functions in the transfer of electrons from NADH to the respiratory chain. The immediate electron acceptor for the enzyme is believed to be ubiquinone. The chain is NADH-ubiquinone oxidoreductase chain 1 (MT-ND1) from Hsunycteris thomasi (Thomas's nectar bat).